Consider the following 41-residue polypeptide: Giant hemoglobin AI chain (41 aa).

Positions 2–41 (DCGMLQRIKVKQQWASVYSSGIAREDFGEAIWKAVFALAP) constitute a Globin domain.

This sequence belongs to the globin family. Giant hemoglobin is composed of four heme-containing chains (AI to AIV), and two linker chains (AV and AVI).

In Lamellibrachia sp. (Deep-sea giant tube worm), this protein is Giant hemoglobin AI chain.